Consider the following 210-residue polypeptide: Na(+)-translocating NADH-quinone reductase subunit D (210 aa).

6 helical membrane passes run 11–31 (ILAPVLDNNPIALQVLGVCSA), 42–62 (FVMTIAVMFVTALSNFFVSLI), 72–92 (IIVQMAIIASLVIVVDQVLKA), 103–123 (VFVGLIITNCIVMGRAEAFAM), 131–151 (FIDGLGNGLGYGFVLITVGFF), and 178–198 (NGLMLLAPSAFFLIGFLIWAI).

This sequence belongs to the NqrDE/RnfAE family. Composed of six subunits; NqrA, NqrB, NqrC, NqrD, NqrE and NqrF.

It is found in the cell inner membrane. The catalysed reaction is a ubiquinone + n Na(+)(in) + NADH + H(+) = a ubiquinol + n Na(+)(out) + NAD(+). Its function is as follows. NQR complex catalyzes the reduction of ubiquinone-1 to ubiquinol by two successive reactions, coupled with the transport of Na(+) ions from the cytoplasm to the periplasm. NqrA to NqrE are probably involved in the second step, the conversion of ubisemiquinone to ubiquinol. This is Na(+)-translocating NADH-quinone reductase subunit D from Vibrio atlanticus (strain LGP32) (Vibrio splendidus (strain Mel32)).